A 345-amino-acid chain; its full sequence is Anthranilate phosphoribosyltransferase (345 aa).

Residues glycine 84, 87–88 (GD), threonine 92, 94–97 (NVTT), 112–120 (KHGNRSVSS), and serine 124 each bind 5-phospho-alpha-D-ribose 1-diphosphate. An anthranilate-binding site is contributed by glycine 84. Threonine 96 contributes to the Mg(2+) binding site. Residue asparagine 115 participates in anthranilate binding. Arginine 170 is a binding site for anthranilate. Residues aspartate 228 and glutamate 229 each coordinate Mg(2+).

It belongs to the anthranilate phosphoribosyltransferase family. As to quaternary structure, homodimer. It depends on Mg(2+) as a cofactor.

The catalysed reaction is N-(5-phospho-beta-D-ribosyl)anthranilate + diphosphate = 5-phospho-alpha-D-ribose 1-diphosphate + anthranilate. The protein operates within amino-acid biosynthesis; L-tryptophan biosynthesis; L-tryptophan from chorismate: step 2/5. Its function is as follows. Catalyzes the transfer of the phosphoribosyl group of 5-phosphorylribose-1-pyrophosphate (PRPP) to anthranilate to yield N-(5'-phosphoribosyl)-anthranilate (PRA). This Corynebacterium aurimucosum (strain ATCC 700975 / DSM 44827 / CIP 107346 / CN-1) (Corynebacterium nigricans) protein is Anthranilate phosphoribosyltransferase.